Consider the following 408-residue polypeptide: Succinylornithine transaminase (408 aa).

Lys252 carries the N6-(pyridoxal phosphate)lysine modification.

It belongs to the class-III pyridoxal-phosphate-dependent aminotransferase family. AstC subfamily. Pyridoxal 5'-phosphate is required as a cofactor.

It catalyses the reaction N(2)-succinyl-L-ornithine + 2-oxoglutarate = N-succinyl-L-glutamate 5-semialdehyde + L-glutamate. It functions in the pathway amino-acid degradation; L-arginine degradation via AST pathway; L-glutamate and succinate from L-arginine: step 3/5. Functionally, catalyzes the transamination of N(2)-succinylornithine and alpha-ketoglutarate into N(2)-succinylglutamate semialdehyde and glutamate. Can also act as an acetylornithine aminotransferase. The protein is Succinylornithine transaminase of Salmonella enteritidis PT4 (strain P125109).